We begin with the raw amino-acid sequence, 369 residues long: Protein-glutamate methylesterase/protein-glutamine glutaminase (369 aa).

A Response regulatory domain is found at 6–122; it reads RAVVADDSHF…SMEMSRLKDQ (117 aa). Asp-56 carries the post-translational modification 4-aspartylphosphate. The segment at 136–178 is disordered; sequence GATGSRSGTGSDSGTAPTTAGGSATDRRGTGGSSGQTTYVANP. Residues 138–159 show a composition bias toward low complexity; sequence TGSRSGTGSDSGTAPTTAGGSA. In terms of domain architecture, CheB-type methylesterase spans 173 to 367; it reads TYVANPTLVI…DGVIDTITTE (195 aa). Active-site residues include Ser-185, His-212, and Asp-309.

This sequence belongs to the CheB family. Phosphorylated by CheA. Phosphorylation of the N-terminal regulatory domain activates the methylesterase activity.

The protein localises to the cytoplasm. The catalysed reaction is [protein]-L-glutamate 5-O-methyl ester + H2O = L-glutamyl-[protein] + methanol + H(+). It catalyses the reaction L-glutaminyl-[protein] + H2O = L-glutamyl-[protein] + NH4(+). Involved in chemotaxis. Part of a chemotaxis signal transduction system that modulates chemotaxis in response to various stimuli. Catalyzes the demethylation of specific methylglutamate residues introduced into the chemoreceptors (methyl-accepting chemotaxis proteins or MCP) by CheR. Also mediates the irreversible deamidation of specific glutamine residues to glutamic acid. This is Protein-glutamate methylesterase/protein-glutamine glutaminase from Haloarcula marismortui (strain ATCC 43049 / DSM 3752 / JCM 8966 / VKM B-1809) (Halobacterium marismortui).